Consider the following 369-residue polypeptide: tRNA pseudouridine synthase D (369 aa).

Aspartate 80 serves as the catalytic Nucleophile. Positions 156-318 (GIPNWFGEQR…LKQERRALRL (163 aa)) constitute a TRUD domain.

This sequence belongs to the pseudouridine synthase TruD family.

It carries out the reaction uridine(13) in tRNA = pseudouridine(13) in tRNA. In terms of biological role, responsible for synthesis of pseudouridine from uracil-13 in transfer RNAs. The sequence is that of tRNA pseudouridine synthase D from Xanthomonas axonopodis pv. citri (strain 306).